The primary structure comprises 290 residues: Nucleotide-binding protein Aave_3603 (290 aa).

Residue 13-20 coordinates ATP; sequence GMSGSGKS. Position 62–65 (62–65) interacts with GTP; the sequence is DVRS.

The protein belongs to the RapZ-like family.

Displays ATPase and GTPase activities. This chain is Nucleotide-binding protein Aave_3603, found in Paracidovorax citrulli (strain AAC00-1) (Acidovorax citrulli).